Consider the following 842-residue polypeptide: Alanine--tRNA ligase (842 aa).

4 residues coordinate Zn(2+): H549, H553, C650, and H654.

Belongs to the class-II aminoacyl-tRNA synthetase family. Zn(2+) serves as cofactor.

Its subcellular location is the cytoplasm. It catalyses the reaction tRNA(Ala) + L-alanine + ATP = L-alanyl-tRNA(Ala) + AMP + diphosphate. Functionally, catalyzes the attachment of alanine to tRNA(Ala) in a two-step reaction: alanine is first activated by ATP to form Ala-AMP and then transferred to the acceptor end of tRNA(Ala). Also edits incorrectly charged Ser-tRNA(Ala) and Gly-tRNA(Ala) via its editing domain. The protein is Alanine--tRNA ligase of Campylobacter jejuni subsp. jejuni serotype O:2 (strain ATCC 700819 / NCTC 11168).